Here is a 245-residue protein sequence, read N- to C-terminus: tRNA pseudouridine synthase A (245 aa).

The active-site Nucleophile is Asp-52. Tyr-111 provides a ligand contact to substrate.

Belongs to the tRNA pseudouridine synthase TruA family. In terms of assembly, homodimer.

It catalyses the reaction uridine(38/39/40) in tRNA = pseudouridine(38/39/40) in tRNA. In terms of biological role, formation of pseudouridine at positions 38, 39 and 40 in the anticodon stem and loop of transfer RNAs. The chain is tRNA pseudouridine synthase A from Thermotoga maritima (strain ATCC 43589 / DSM 3109 / JCM 10099 / NBRC 100826 / MSB8).